The following is a 279-amino-acid chain: Putative pyruvate, phosphate dikinase regulatory protein (279 aa).

An ADP-binding site is contributed by 153 to 160 (GVSRTSKT).

The protein belongs to the pyruvate, phosphate/water dikinase regulatory protein family. PDRP subfamily.

The catalysed reaction is N(tele)-phospho-L-histidyl/L-threonyl-[pyruvate, phosphate dikinase] + ADP = N(tele)-phospho-L-histidyl/O-phospho-L-threonyl-[pyruvate, phosphate dikinase] + AMP + H(+). It catalyses the reaction N(tele)-phospho-L-histidyl/O-phospho-L-threonyl-[pyruvate, phosphate dikinase] + phosphate + H(+) = N(tele)-phospho-L-histidyl/L-threonyl-[pyruvate, phosphate dikinase] + diphosphate. Bifunctional serine/threonine kinase and phosphorylase involved in the regulation of the pyruvate, phosphate dikinase (PPDK) by catalyzing its phosphorylation/dephosphorylation. In Bradyrhizobium diazoefficiens (strain JCM 10833 / BCRC 13528 / IAM 13628 / NBRC 14792 / USDA 110), this protein is Putative pyruvate, phosphate dikinase regulatory protein.